A 160-amino-acid chain; its full sequence is CXXC motif containing zinc binding protein (160 aa).

Residues C33, C36, C67, and C70 each contribute to the Zn(2+) site.

Belongs to the UPF0587 family.

In Xenopus laevis (African clawed frog), this protein is CXXC motif containing zinc binding protein (czib).